The sequence spans 175 residues: uncharacterized protein (175 aa).

The span at 35–56 (LIENSNYDNNNINNNNNNNNTD) shows a compositional bias: low complexity. Residues 35–70 (LIENSNYDNNNINNNNNNNNTDNDNDNNNDNEPFYN) are disordered. A run of 2 helical transmembrane segments spans residues 106-126 (ILSFSIKSFLLLILYILFFNY) and 132-152 (YFIILLSLNLIITLISIKSIF).

The protein localises to the membrane. This is an uncharacterized protein from Dictyostelium discoideum (Social amoeba).